A 220-amino-acid chain; its full sequence is Pyrrolidone-carboxylate peptidase 1 (220 aa).

Active-site residues include E80, C143, and H172.

The protein belongs to the peptidase C15 family. In terms of assembly, homotetramer.

The protein localises to the cytoplasm. The enzyme catalyses Release of an N-terminal pyroglutamyl group from a polypeptide, the second amino acid generally not being Pro.. In terms of biological role, removes 5-oxoproline from various penultimate amino acid residues except L-proline. This Photorhabdus laumondii subsp. laumondii (strain DSM 15139 / CIP 105565 / TT01) (Photorhabdus luminescens subsp. laumondii) protein is Pyrrolidone-carboxylate peptidase 1.